A 95-amino-acid chain; its full sequence is MAECLSQTDKGVVLSVHVQPRASRNELAGLQGESLKIRLTSPPVEGAANKLCREFLAKLLGVAKSRVTLVSGDKSRHKRLLIEGVTLDEVRNKLL.

The protein belongs to the UPF0235 family.

In Syntrophotalea carbinolica (strain DSM 2380 / NBRC 103641 / GraBd1) (Pelobacter carbinolicus), this protein is UPF0235 protein Pcar_0617.